The chain runs to 233 residues: MNHLNKLMERLGHQFNNLELLKIALTHRSSGADNNERLEFLGDSVLGFIIASELYQRRPQAREGDLSRMRASMVNGDELAQMSTKLGINEYLQLGVGEQKSGGKRRRSILADALEAIVGAIYIDAGLETCRRCVLNWYGERVDDLSKLSPKKDAKSLLQEWLQARRLPLPTYEVKITGEAHAQTFTVNCYVKGLPHKTEGVNTTRRRAEQIAAKRFLELLDDGKGDGITERDQ.

In terms of domain architecture, RNase III spans 4 to 126; that stretch reads LNKLMERLGH…IVGAIYIDAG (123 aa). Glutamate 39 lines the Mg(2+) pocket. Aspartate 43 is an active-site residue. Mg(2+) contacts are provided by aspartate 112 and glutamate 115. Residue glutamate 115 is part of the active site. Residues 153-222 enclose the DRBM domain; that stretch reads DAKSLLQEWL…AKRFLELLDD (70 aa).

This sequence belongs to the ribonuclease III family. As to quaternary structure, homodimer. It depends on Mg(2+) as a cofactor.

The protein resides in the cytoplasm. It catalyses the reaction Endonucleolytic cleavage to 5'-phosphomonoester.. Functionally, digests double-stranded RNA. Involved in the processing of primary rRNA transcript to yield the immediate precursors to the large and small rRNAs (23S and 16S). Processes some mRNAs, and tRNAs when they are encoded in the rRNA operon. Processes pre-crRNA and tracrRNA of type II CRISPR loci if present in the organism. The chain is Ribonuclease 3 from Coxiella burnetii (strain Dugway 5J108-111).